The sequence spans 356 residues: MFSLPSLSSWLPSLPSFEWGSSLFDSLLQGLIGALGVSVLNSLLKVYFFVACVNDPQRQPQKQRLSAQWASLEMLHLAGLTLFLTLIGSRVAALVVLEFSLRAVSTLLSLGKGSGNKERLQLFLVCQFSLGCGLSCGLSFLQEGAPHRSLNLLLSLGLAVLLALGARRLTRHICSLYELHSSQRYCGVCLGLLASQHGMPRLLSRTLTVAFAVSDLAAVALINKDFLSSSEAVRFWTPLTICYTLLVIYMQEEQWQHRFSLQGQVQTVLVRMGGLFLLLMTVGRWLDLLSIFFSLLGELWCLAGIRALIDLCQIQGFPPQRPTVTAAVTAEGESGWTDPCEPRPSTPAPARSAVPS.

The next 8 helical transmembrane spans lie at 31-51 (LIGA…FFVA), 77-97 (LAGL…LVVL), 120-140 (LQLF…GLSF), 144-164 (GAPH…LLAL), 202-222 (LLSR…VALI), 232-250 (AVRF…VIYM), 263-283 (GQVQ…MTVG), and 285-305 (WLDL…LAGI). The disordered stretch occupies residues 331–356 (EGESGWTDPCEPRPSTPAPARSAVPS).

The protein belongs to the TMEM82 family.

Its subcellular location is the membrane. This is Transmembrane protein 82 (Tmem82) from Mus musculus (Mouse).